The primary structure comprises 316 residues: tRNA dimethylallyltransferase (316 aa).

Position 17–24 (17–24 (GPTASGKT)) interacts with ATP. Residue 19-24 (TASGKT) participates in substrate binding. Interaction with substrate tRNA regions lie at residues 42–45 (DSAL), 166–170 (QRLSR), and 247–252 (RCVGYR).

This sequence belongs to the IPP transferase family. Monomer. It depends on Mg(2+) as a cofactor.

It catalyses the reaction adenosine(37) in tRNA + dimethylallyl diphosphate = N(6)-dimethylallyladenosine(37) in tRNA + diphosphate. Its function is as follows. Catalyzes the transfer of a dimethylallyl group onto the adenine at position 37 in tRNAs that read codons beginning with uridine, leading to the formation of N6-(dimethylallyl)adenosine (i(6)A). In Salmonella schwarzengrund (strain CVM19633), this protein is tRNA dimethylallyltransferase.